The sequence spans 635 residues: ATP-dependent zinc metalloprotease FtsH (635 aa).

The Cytoplasmic segment spans residues 1–4 (MVKN). The helical transmembrane segment at 5–25 (LVLWVVVAVIMMTAYQSFNSS) threads the bilayer. At 26–97 (SVENSTDYTT…VEGTPFERRG (72 aa)) the chain is on the periplasmic side. A helical membrane pass occupies residues 98–118 (FLSQILISWFPMLFLVGVWVF). Residues 119–635 (FMRQMQGGGG…AVENTDDFNV (517 aa)) lie on the Cytoplasmic side of the membrane. 191–198 (GPPGTGKT) contacts ATP. Histidine 413 is a binding site for Zn(2+). Residue glutamate 414 is part of the active site. Residues histidine 417 and aspartate 491 each coordinate Zn(2+). The interval 593–635 (NREPVTPPSGWGEPKTQQAAYANSTTNDTKPESAVENTDDFNV) is disordered. Residues 607–620 (KTQQAAYANSTTND) are compositionally biased toward polar residues.

In the central section; belongs to the AAA ATPase family. It in the C-terminal section; belongs to the peptidase M41 family. As to quaternary structure, homohexamer. The cofactor is Zn(2+).

Its subcellular location is the cell inner membrane. Its function is as follows. Acts as a processive, ATP-dependent zinc metallopeptidase for both cytoplasmic and membrane proteins. Plays a role in the quality control of integral membrane proteins. The chain is ATP-dependent zinc metalloprotease FtsH from Haemophilus influenzae (strain ATCC 51907 / DSM 11121 / KW20 / Rd).